A 142-amino-acid polypeptide reads, in one-letter code: MAKGKYAANILKQTRKNARWKDTSYGRRVLGLNVKADPLGGAPQGRGIVLEKVGVEAKQPNSAIRKCVRIQLIKNGRQVTAFCPGDGAVNFIDEHDEVTVERIGGRMGGAMGDIPGVRFRVTAVNNVSLNQMVIGRLEKPRR.

The protein belongs to the universal ribosomal protein uS12 family. In terms of assembly, part of the 30S ribosomal subunit.

Functionally, with S4 and S5 plays an important role in translational accuracy. Located at the interface of the 30S and 50S subunits. The protein is Small ribosomal subunit protein uS12 of Methanosarcina barkeri (strain Fusaro / DSM 804).